The sequence spans 642 residues: LIM domain kinase 2 (642 aa).

LIM zinc-binding domains lie at 12–63 (CLGC…CHKD) and 72–124 (CHGC…CGKC). The PDZ domain occupies 152–239 (LISMPAATDG…TLQLLIEHDP (88 aa)). Residues 282 to 304 (RSLRRSNSISKSPGPSSPKEPLL) form a disordered region. Positions 286-304 (RSNSISKSPGPSSPKEPLL) are enriched in low complexity. The 278-residue stretch at 331–608 (LIHGEVLGKG…DSFEALSLYL (278 aa)) folds into the Protein kinase domain. ATP-binding positions include 337–345 (LGKGFFGQA) and Lys-360. Residue Asp-451 is part of the active site. Thr-505 carries the phosphothreonine modification.

Belongs to the protein kinase superfamily. TKL Ser/Thr protein kinase family. As to quaternary structure, binds ROCK1 and LKAP. As to expression, expressed predominantly in the lung, and faintly in the kidney, liver, brain, spleen, gizzard, and intestine.

Its subcellular location is the cytoplasm. It is found in the cytoskeleton. The protein localises to the spindle. It localises to the microtubule organizing center. The protein resides in the centrosome. The catalysed reaction is L-seryl-[protein] + ATP = O-phospho-L-seryl-[protein] + ADP + H(+). It catalyses the reaction L-threonyl-[protein] + ATP = O-phospho-L-threonyl-[protein] + ADP + H(+). In terms of biological role, serine/threonine-protein kinase that plays an essential role in the regulation of actin filament dynamics. Acts downstream of several Rho family GTPase signal transduction pathways. Involved in astral microtubule organization and mitotic spindle orientation during early stages of mitosis by mediating phosphorylation of TPPP. This is LIM domain kinase 2 (LIMK2) from Gallus gallus (Chicken).